The sequence spans 303 residues: GTPase Era (303 aa).

An Era-type G domain is found at 8-176 (YCGFIAIVGR…ASIVRKHMPE (169 aa)). The interval 16-23 (GRPNVGKS) is G1. 16 to 23 (GRPNVGKS) serves as a coordination point for GTP. The G2 stretch occupies residues 42–46 (QTTRH). A G3 region spans residues 63 to 66 (DTPG). Residues 63–67 (DTPGL) and 125–128 (NKVD) contribute to the GTP site. A G4 region spans residues 125–128 (NKVD). The segment at 155–157 (ISA) is G5. The 78-residue stretch at 207–284 (LGEELPYSVT…HLELWVKVKS (78 aa)) folds into the KH type-2 domain.

The protein belongs to the TRAFAC class TrmE-Era-EngA-EngB-Septin-like GTPase superfamily. Era GTPase family. Monomer.

It localises to the cytoplasm. The protein localises to the cell inner membrane. Its function is as follows. An essential GTPase that binds both GDP and GTP, with rapid nucleotide exchange. Plays a role in 16S rRNA processing and 30S ribosomal subunit biogenesis and possibly also in cell cycle regulation and energy metabolism. The chain is GTPase Era from Yersinia pseudotuberculosis serotype O:1b (strain IP 31758).